A 304-amino-acid chain; its full sequence is Granaticin polyketide synthase bifunctional cyclase/dehydratase (304 aa).

Its pathway is antifungal biosynthesis; monensin biosynthesis. In terms of biological role, is needed for correct cyclization of the oligoketide leading to isochromanequinone formation. This is Granaticin polyketide synthase bifunctional cyclase/dehydratase from Streptomyces virginiae (Streptomyces cinnamonensis).